Here is a 623-residue protein sequence, read N- to C-terminus: tRNA 5-methylaminomethyl-2-thiouridine biosynthesis bifunctional protein MnmC (623 aa).

Positions 1 to 209 (MTQRGEVPDF…QRDMLHAVYQ (209 aa)) are tRNA (mnm(5)s(2)U34)-methyltransferase. Residues 232–623 (IGGGIAGAAT…LAKALDSGRM (392 aa)) form an FAD-dependent cmnm(5)s(2)U34 oxidoreductase region.

It in the N-terminal section; belongs to the methyltransferase superfamily. tRNA (mnm(5)s(2)U34)-methyltransferase family. The protein in the C-terminal section; belongs to the DAO family. FAD is required as a cofactor.

The protein resides in the cytoplasm. The enzyme catalyses 5-aminomethyl-2-thiouridine(34) in tRNA + S-adenosyl-L-methionine = 5-methylaminomethyl-2-thiouridine(34) in tRNA + S-adenosyl-L-homocysteine + H(+). Catalyzes the last two steps in the biosynthesis of 5-methylaminomethyl-2-thiouridine (mnm(5)s(2)U) at the wobble position (U34) in tRNA. Catalyzes the FAD-dependent demodification of cmnm(5)s(2)U34 to nm(5)s(2)U34, followed by the transfer of a methyl group from S-adenosyl-L-methionine to nm(5)s(2)U34, to form mnm(5)s(2)U34. This chain is tRNA 5-methylaminomethyl-2-thiouridine biosynthesis bifunctional protein MnmC (mnmC), found in Verminephrobacter eiseniae (strain EF01-2).